The following is a 671-amino-acid chain: Phospholipid:diacylglycerol acyltransferase 1 (671 aa).

Positions 1–46 are disordered; it reads MPLIHRKKPTEKPSTPPSEEVVHDEDSQKKPHESSKSHHKKSNGGG. Topologically, residues 1 to 54 are cytoplasmic; the sequence is MPLIHRKKPTEKPSTPPSEEVVHDEDSQKKPHESSKSHHKKSNGGGKWSCIDSC. Positions 20 to 36 are enriched in basic and acidic residues; it reads EVVHDEDSQKKPHESSK. A helical transmembrane segment spans residues 55–75; that stretch reads CWFIGCVCVTWWFLLFLYNAM. Topologically, residues 76–671 are lumenal; it reads PASFPQYVTE…EWSERIDLKL (596 aa). The N-linked (GlcNAc...) asparagine glycan is linked to Asn161. The active-site Acyl-ester intermediate is the Ser254. Asn381 and Asn434 each carry an N-linked (GlcNAc...) asparagine glycan. Active-site charge relay system residues include Asp573 and His626. Asn647 is a glycosylation site (N-linked (GlcNAc...) asparagine).

This sequence belongs to the AB hydrolase superfamily. Lipase family. In terms of tissue distribution, ubiquitous. Highest expression in young developing seeds.

It is found in the membrane. The enzyme catalyses a glycerophospholipid + a 1,2-diacyl-sn-glycerol = a monoacylglycerophospholipid + a triacyl-sn-glycerol. Its pathway is glycerolipid metabolism; triacylglycerol biosynthesis. Its function is as follows. Triacylglycerol formation by an acyl-CoA independent pathway. The enzyme preferentially transfers acyl groups from the sn-2 position of a phospholipid to diacylglycerol, thus forming an sn-1-lysophospholipid. Involved in epoxy and hydroxy fatty acid accumulation in seeds. Has complementary functions with DAG1 that are essential for triacylglycerol synthesis and normal development of both seeds and pollen. This chain is Phospholipid:diacylglycerol acyltransferase 1 (PDAT1), found in Arabidopsis thaliana (Mouse-ear cress).